Here is a 716-residue protein sequence, read N- to C-terminus: Segment polarity protein dishevelled homolog DVL-3 (716 aa).

A DIX domain is found at 1 to 82 (MGETKIIYHL…RVVSWLVSAE (82 aa)). Omega-N-methylarginine is present on arginine 27. Phosphoserine occurs at positions 48 and 125. The disordered stretch occupies residues 85 to 235 (HPEPAPFCAD…VSRIERSSSF (151 aa)). Basic and acidic residues predominate over residues 142-156 (QRERPRRRDGPEHAA). Residues 175-190 (SSSTLMSSELETTSFF) are compositionally biased toward low complexity. Serine 192 bears the Phosphoserine mark. The segment covering 199–212 (SRFSSSTEQSSASR) has biased composition (low complexity). Arginine 212 carries the post-translational modification Omega-N-methylarginine. Over residues 213 to 226 (LMRRHKRRRRKQKV) the composition is skewed to basic residues. The PDZ domain maps to 249–321 (TVTLNMEKYN…NDDAVRVLRE (73 aa)). Asymmetric dimethylarginine; by PRMT1; alternate is present on arginine 271. 2 positions are modified to symmetric dimethylarginine; by PRMT7; alternate: arginine 271 and arginine 342. An Omega-N-methylarginine; alternate modification is found at arginine 342. At threonine 346 the chain carries Phosphothreonine. In terms of domain architecture, DEP spans 422–496 (PESGLEVRDR…SEQCYYIFGD (75 aa)). A disordered region spans residues 546–691 (PYNPHPGFPE…PPGRDLASVP (146 aa)). The span at 565 to 581 (ASSQHSEGSRSSGSNRS) shows a compositional bias: low complexity. Composition is skewed to basic and acidic residues over residues 582-595 (GSDRRKEKDPKAGD) and 604-622 (ESDHTTRSSLRGPRERAPS). A Symmetric dimethylarginine; by PRMT7 modification is found at arginine 614. 2 stretches are compositionally biased toward pro residues: residues 653-663 (YGPPGVPPLYG) and 670-682 (TPPPAAMGPPGAP). Serine 697 carries the post-translational modification Phosphoserine. An Omega-N-methylarginine; alternate modification is found at arginine 698. A Dimethylated arginine; alternate modification is found at arginine 698. At serine 700 the chain carries Phosphoserine.

This sequence belongs to the DSH family. Interacts (via the PDZ domain) with the C-terminal regions of VANGL1 and VANGL2. Interacts (via the region containing both the PDZ and DEP domains) with LRRFIP2; the DIX domain may inhibit this interaction. Interacts with CYLD. Interacts with CEP164 and DAB2. Interacts with DCDC2. Interacts with FOXK1 and FOXK2. Interacts with DAAM2. Post-translationally, ubiquitinated. Deubiquitinated by CYLD, which acts on 'Lys-63'-linked ubiquitin chains. Phosphorylated by CSNK1D. In terms of processing, arginine methylation may function as a switch in regulation of function in Wnt signaling. Ubiquitous.

The protein resides in the cytoplasm. Involved in the signal transduction pathway mediated by multiple Wnt genes. This chain is Segment polarity protein dishevelled homolog DVL-3 (Dvl3), found in Mus musculus (Mouse).